The sequence spans 297 residues: Nitrogenase iron protein 2 (297 aa).

14 to 21 (GKGGIGKS) is an ATP binding site. Cysteine 102 contacts [4Fe-4S] cluster. Arginine 105 carries the post-translational modification ADP-ribosylarginine; by dinitrogenase reductase ADP-ribosyltransferase. Cysteine 136 serves as a coordination point for [4Fe-4S] cluster.

This sequence belongs to the NifH/BchL/ChlL family. As to quaternary structure, homodimer. Requires [4Fe-4S] cluster as cofactor. The reversible ADP-ribosylation of Arg-105 inactivates the nitrogenase reductase and regulates nitrogenase activity.

It carries out the reaction N2 + 8 reduced [2Fe-2S]-[ferredoxin] + 16 ATP + 16 H2O = H2 + 8 oxidized [2Fe-2S]-[ferredoxin] + 2 NH4(+) + 16 ADP + 16 phosphate + 6 H(+). In terms of biological role, the key enzymatic reactions in nitrogen fixation are catalyzed by the nitrogenase complex, which has 2 components: the iron protein and the molybdenum-iron protein. The polypeptide is Nitrogenase iron protein 2 (nifH2) (Nostoc sp. (strain PCC 7120 / SAG 25.82 / UTEX 2576)).